A 149-amino-acid chain; its full sequence is 3-dehydroquinate dehydratase (149 aa).

Y26 serves as the catalytic Proton acceptor. Substrate contacts are provided by N78, H84, and D91. H104 serves as the catalytic Proton donor. Substrate-binding positions include 105–106 (IS) and R115.

It belongs to the type-II 3-dehydroquinase family. In terms of assembly, homododecamer.

The enzyme catalyses 3-dehydroquinate = 3-dehydroshikimate + H2O. It participates in metabolic intermediate biosynthesis; chorismate biosynthesis; chorismate from D-erythrose 4-phosphate and phosphoenolpyruvate: step 3/7. Functionally, catalyzes a trans-dehydration via an enolate intermediate. This is 3-dehydroquinate dehydratase (aroQ) from Buchnera aphidicola subsp. Schizaphis graminum (strain Sg).